Reading from the N-terminus, the 134-residue chain is Putative toxin MJ0605 (134 aa).

This sequence belongs to the UPF0332 family.

In terms of biological role, putative toxin component of a putative type VII toxin-antitoxin (TA) system. Its cognate antitoxin might be MJ0604. In Methanocaldococcus jannaschii (strain ATCC 43067 / DSM 2661 / JAL-1 / JCM 10045 / NBRC 100440) (Methanococcus jannaschii), this protein is Putative toxin MJ0605.